Consider the following 284-residue polypeptide: Tryptophan 2,3-dioxygenase (284 aa).

Residues Phe-51 to His-55, Tyr-113, and Arg-117 contribute to the substrate site. His-240 is a binding site for heme. Position 254 (Thr-254) interacts with substrate.

Belongs to the tryptophan 2,3-dioxygenase family. In terms of assembly, homotetramer. Heme is required as a cofactor.

The catalysed reaction is L-tryptophan + O2 = N-formyl-L-kynurenine. It functions in the pathway amino-acid degradation; L-tryptophan degradation via kynurenine pathway; L-kynurenine from L-tryptophan: step 1/2. Its function is as follows. Heme-dependent dioxygenase that catalyzes the oxidative cleavage of the L-tryptophan (L-Trp) pyrrole ring and converts L-tryptophan to N-formyl-L-kynurenine. Catalyzes the oxidative cleavage of the indole moiety. This chain is Tryptophan 2,3-dioxygenase, found in Arthrobacter sp. (strain FB24).